The primary structure comprises 68 residues: Large ribosomal subunit protein uL29 (68 aa).

The protein belongs to the universal ribosomal protein uL29 family.

This is Large ribosomal subunit protein uL29 from Chlorobaculum tepidum (strain ATCC 49652 / DSM 12025 / NBRC 103806 / TLS) (Chlorobium tepidum).